A 728-amino-acid polypeptide reads, in one-letter code: Dynamin-like protein 1 (728 aa).

The assembly domain, required for tetramerization stretch occupies residues 1–119 (MKELFQKIWQ…ILQEKVQSID (119 aa)). A Dynamin-type G domain is found at 159–442 (QNLEFNIAIT…LYAGEKSKIA (284 aa)). Residues 169 to 176 (GVMNAGKS) form a G1 motif region. 171-177 (MNAGKSS) contacts GDP. Residues 195 to 196 (ET) form a G2 motif region. Residues 298-301 (DTPG) are G3 motif. The segment at 358-361 (TKAD) is G4 motif. GDP is bound at residue Lys359. Position 388 (Glu388) is a region of interest, G5 motif. 400–402 (SAK) provides a ligand contact to GDP. The tract at residues 470–695 (ENKQGVSEEN…LESLEKVLQS (226 aa)) is required for liposome binding but not for tetramerization.

This sequence belongs to the TRAFAC class dynamin-like GTPase superfamily. Dynamin/Fzo/YdjA family. In terms of assembly, forms a 2:2 heterotetramer with DLP1. DLP2 forms a central back-to-back dimer flanked on each side by a DLP1 subunit. In the crystal structures the 2 DLP1 subunits are in very different conformations.

The protein resides in the cytoplasm. The protein localises to the cytosol. The enzyme catalyses GTP + H2O = GDP + phosphate + H(+). Functionally, the heterotetrameric DLP1(2)-DLP2(2) complex tethers liposomes and may mediate their fusion. Initial binding is probably mediated by DLP1, while DLP2 couples DLP1 subunits and increases the effective reach of the complex up to 45 nm. The role of the nucleotide is unknown. This subunit alone weakly binds to liposomes; GTP, GDP, GMPPCP and GMPPNP do not change heterotetramer binding. Tetramerization is required for GTPase activity, suggesting the GTPase domains (dynamin-type G) from DLP1 and DLP2 must dimerize to reconstitute the GTPase active site. The chain is Dynamin-like protein 1 from Campylobacter jejuni subsp. jejuni serotype O:23/36 (strain 81-176).